The sequence spans 163 residues: N5-carboxyaminoimidazole ribonucleotide mutase (163 aa).

Ser11, Asp14, and Arg41 together coordinate substrate.

Belongs to the AIR carboxylase family. Class I subfamily.

It carries out the reaction 5-carboxyamino-1-(5-phospho-D-ribosyl)imidazole + H(+) = 5-amino-1-(5-phospho-D-ribosyl)imidazole-4-carboxylate. It participates in purine metabolism; IMP biosynthesis via de novo pathway; 5-amino-1-(5-phospho-D-ribosyl)imidazole-4-carboxylate from 5-amino-1-(5-phospho-D-ribosyl)imidazole (N5-CAIR route): step 2/2. Its function is as follows. Catalyzes the conversion of N5-carboxyaminoimidazole ribonucleotide (N5-CAIR) to 4-carboxy-5-aminoimidazole ribonucleotide (CAIR). In Pseudomonas aeruginosa (strain ATCC 15692 / DSM 22644 / CIP 104116 / JCM 14847 / LMG 12228 / 1C / PRS 101 / PAO1), this protein is N5-carboxyaminoimidazole ribonucleotide mutase.